The chain runs to 442 residues: Trigger factor (442 aa).

A PPIase FKBP-type domain is found at 163–248 (NDLVTINYCI…ILNVEEKQEN (86 aa)).

Belongs to the FKBP-type PPIase family. Tig subfamily.

The protein localises to the cytoplasm. The catalysed reaction is [protein]-peptidylproline (omega=180) = [protein]-peptidylproline (omega=0). In terms of biological role, involved in protein export. Acts as a chaperone by maintaining the newly synthesized protein in an open conformation. Functions as a peptidyl-prolyl cis-trans isomerase. The protein is Trigger factor of Buchnera aphidicola subsp. Schizaphis graminum (strain Sg).